The chain runs to 215 residues: Cytochrome b6 (215 aa).

A helical membrane pass occupies residues isoleucine 32–phenylalanine 52. A heme c-binding site is contributed by cysteine 35. The heme b site is built by histidine 86 and histidine 100. 3 helical membrane-spanning segments follow: residues alanine 90–phenylalanine 110, leucine 116–tyrosine 136, and leucine 186–isoleucine 206. Positions 187 and 202 each coordinate heme b.

The protein belongs to the cytochrome b family. PetB subfamily. In terms of assembly, the 4 large subunits of the cytochrome b6-f complex are cytochrome b6, subunit IV (17 kDa polypeptide, PetD), cytochrome f and the Rieske protein, while the 4 small subunits are PetG, PetL, PetM and PetN. The complex functions as a dimer. It depends on heme b as a cofactor. Heme c serves as cofactor.

It localises to the plastid. The protein localises to the chloroplast thylakoid membrane. In terms of biological role, component of the cytochrome b6-f complex, which mediates electron transfer between photosystem II (PSII) and photosystem I (PSI), cyclic electron flow around PSI, and state transitions. This chain is Cytochrome b6, found in Ostreococcus tauri.